Here is a 236-residue protein sequence, read N- to C-terminus: 1-(5-phosphoribosyl)-5-[(5-phosphoribosylamino)methylideneamino] imidazole-4-carboxamide isomerase (236 aa).

Residue Asp-8 is the Proton acceptor of the active site. The active-site Proton donor is Asp-127.

This sequence belongs to the HisA/HisF family.

Its subcellular location is the cytoplasm. The enzyme catalyses 1-(5-phospho-beta-D-ribosyl)-5-[(5-phospho-beta-D-ribosylamino)methylideneamino]imidazole-4-carboxamide = 5-[(5-phospho-1-deoxy-D-ribulos-1-ylimino)methylamino]-1-(5-phospho-beta-D-ribosyl)imidazole-4-carboxamide. It participates in amino-acid biosynthesis; L-histidine biosynthesis; L-histidine from 5-phospho-alpha-D-ribose 1-diphosphate: step 4/9. This chain is 1-(5-phosphoribosyl)-5-[(5-phosphoribosylamino)methylideneamino] imidazole-4-carboxamide isomerase, found in Sulfurimonas denitrificans (strain ATCC 33889 / DSM 1251) (Thiomicrospira denitrificans (strain ATCC 33889 / DSM 1251)).